A 421-amino-acid chain; its full sequence is MQTQILERMESDVRTYSRSFPVVFTKARNARLTDEEGREYIDFLAGAGTLNYGHNNPHLKQALLDYIDSDGIVHGLDFWTAAKRDYLETLEEVILKPRGLDYKVHLPGPTGTNAVEAAIRLARVAKGRHNIVSFTNGFHGVTMGALATTGNRKFREATGGVPTQAASFMPFDGYLGSSTDTLDYFEKLLGDKSGGLDVPAAVIVETVQGEGGINVAGLEWLKRLESICRANDILLIIDDIQAGCGRTGKFFSFEHAGITPDIVTNSKSLSGYGLPFAHVLMRPELDKWKPGQYNGTFRGFNLAFATAAAAMRKYWSDDTFERDVQRKARIVEERFGKIAAWLSENGIEASERGRGLMRGIDVGSGDIADKITHQAFENGLIIETSGQDGEVVKCLCPLTIPDEDLVEGLDILETSTKQAFS.

K267 is subject to N6-(pyridoxal phosphate)lysine.

It belongs to the class-III pyridoxal-phosphate-dependent aminotransferase family. In terms of assembly, homohexamer. Requires pyridoxal 5'-phosphate as cofactor.

It carries out the reaction L-2,4-diaminobutanoate + 2-oxoglutarate = L-aspartate 4-semialdehyde + L-glutamate. Its pathway is amine and polyamine biosynthesis; ectoine biosynthesis; L-ectoine from L-aspartate 4-semialdehyde: step 1/3. Catalyzes reversively the conversion of L-aspartate beta-semialdehyde (ASA) to L-2,4-diaminobutyrate (DABA) by transamination with L-glutamate. Seems to use L-glutamate specifically as the amino group donor to ASA, as it is not active with L-alanine, L-glutamine, L-aspartate and L-lysine, and is only poorly active with L-homoserine. In the reverse reaction, gamma-aminobutyric acid (GABA) and L-ornithine can also be used as amino group donors to 2-oxoglutarate, but with a reduced activity compared to that with DABA. The polypeptide is Diaminobutyrate--2-oxoglutarate transaminase (ectB) (Halomonas elongata (strain ATCC 33173 / DSM 2581 / NBRC 15536 / NCIMB 2198 / 1H9)).